The chain runs to 57 residues: Large ribosomal subunit protein bL32 (57 aa).

The disordered stretch occupies residues 1-23 (MAVPKKKTSKSKRDKRRATWRHK).

It belongs to the bacterial ribosomal protein bL32 family.

This chain is Large ribosomal subunit protein bL32, found in Trichormus variabilis (strain ATCC 29413 / PCC 7937) (Anabaena variabilis).